The following is a 152-amino-acid chain: Xanthine-guanine phosphoribosyltransferase (152 aa).

5-phospho-alpha-D-ribose 1-diphosphate is bound by residues 37 to 38 (RG), Arg69, and 88 to 96 (DDLVDTGGT). Arg69 is a binding site for GMP. Asp89 is a Mg(2+) binding site. Guanine contacts are provided by Asp92 and Ile135. Residues Asp92 and Ile135 each coordinate xanthine. GMP contacts are provided by residues 92–96 (DTGGT) and 134–135 (WI).

Belongs to the purine/pyrimidine phosphoribosyltransferase family. XGPT subfamily. Homotetramer. Mg(2+) is required as a cofactor.

The protein localises to the cell inner membrane. The enzyme catalyses GMP + diphosphate = guanine + 5-phospho-alpha-D-ribose 1-diphosphate. It catalyses the reaction XMP + diphosphate = xanthine + 5-phospho-alpha-D-ribose 1-diphosphate. The catalysed reaction is IMP + diphosphate = hypoxanthine + 5-phospho-alpha-D-ribose 1-diphosphate. It functions in the pathway purine metabolism; GMP biosynthesis via salvage pathway; GMP from guanine: step 1/1. It participates in purine metabolism; XMP biosynthesis via salvage pathway; XMP from xanthine: step 1/1. Purine salvage pathway enzyme that catalyzes the transfer of the ribosyl-5-phosphate group from 5-phospho-alpha-D-ribose 1-diphosphate (PRPP) to the N9 position of the 6-oxopurines guanine and xanthine to form the corresponding ribonucleotides GMP (guanosine 5'-monophosphate) and XMP (xanthosine 5'-monophosphate), with the release of PPi. To a lesser extent, also acts on hypoxanthine. In Shigella boydii serotype 4 (strain Sb227), this protein is Xanthine-guanine phosphoribosyltransferase.